Reading from the N-terminus, the 105-residue chain is Integration host factor subunit alpha (105 aa).

The protein belongs to the bacterial histone-like protein family. In terms of assembly, heterodimer of an alpha and a beta chain.

Its function is as follows. This protein is one of the two subunits of integration host factor, a specific DNA-binding protein that functions in genetic recombination as well as in transcriptional and translational control. The polypeptide is Integration host factor subunit alpha (Xanthobacter autotrophicus (strain ATCC BAA-1158 / Py2)).